Here is a 382-residue protein sequence, read N- to C-terminus: Histidinol-phosphate aminotransferase (382 aa).

Residues Met1–Ser24 are disordered. Basic and acidic residues predominate over residues Pro9 to Gly22. An N6-(pyridoxal phosphate)lysine modification is found at Lys233.

The protein belongs to the class-II pyridoxal-phosphate-dependent aminotransferase family. Histidinol-phosphate aminotransferase subfamily. Homodimer. Requires pyridoxal 5'-phosphate as cofactor.

The catalysed reaction is L-histidinol phosphate + 2-oxoglutarate = 3-(imidazol-4-yl)-2-oxopropyl phosphate + L-glutamate. It participates in amino-acid biosynthesis; L-histidine biosynthesis; L-histidine from 5-phospho-alpha-D-ribose 1-diphosphate: step 7/9. This chain is Histidinol-phosphate aminotransferase, found in Mycobacterium ulcerans (strain Agy99).